A 1203-amino-acid chain; its full sequence is DNA-directed RNA polymerase subunit beta' (1203 aa).

Zn(2+) is bound by residues cysteine 60, cysteine 62, cysteine 75, and cysteine 78. Aspartate 449, aspartate 451, and aspartate 453 together coordinate Mg(2+). Residues cysteine 818, cysteine 892, cysteine 899, and cysteine 902 each coordinate Zn(2+).

This sequence belongs to the RNA polymerase beta' chain family. In terms of assembly, the RNAP catalytic core consists of 2 alpha, 1 beta, 1 beta' and 1 omega subunit. When a sigma factor is associated with the core the holoenzyme is formed, which can initiate transcription. Mg(2+) is required as a cofactor. The cofactor is Zn(2+).

The catalysed reaction is RNA(n) + a ribonucleoside 5'-triphosphate = RNA(n+1) + diphosphate. Its function is as follows. DNA-dependent RNA polymerase catalyzes the transcription of DNA into RNA using the four ribonucleoside triphosphates as substrates. This Bacillus cereus (strain ZK / E33L) protein is DNA-directed RNA polymerase subunit beta'.